A 582-amino-acid chain; its full sequence is Actin-histidine N-methyltransferase (582 aa).

Residues Arg75, 104–106 (EGF), Arg254, 275–279 (DMCNH), and 325–327 (NGF) each bind S-adenosyl-L-methionine. The SET domain maps to 94 to 314 (DGFELVEFPE…SGEQIYIFYG (221 aa)). Residues 550-582 (DKDLLPNGTKSENDSFLAEDNQQETGNAKDFCS) are disordered.

It belongs to the class V-like SAM-binding methyltransferase superfamily. SETD3 actin-histidine methyltransferase family.

The protein resides in the cytoplasm. The catalysed reaction is L-histidyl-[protein] + S-adenosyl-L-methionine = N(tele)-methyl-L-histidyl-[protein] + S-adenosyl-L-homocysteine + H(+). Its function is as follows. Protein-histidine N-methyltransferase that specifically mediates 3-methylhistidine (tele-methylhistidine) methylation of actin at 'His-73'. Does not have protein-lysine N-methyltransferase activity and probably only catalyzes histidine methylation of actin. This Xenopus tropicalis (Western clawed frog) protein is Actin-histidine N-methyltransferase.